A 770-amino-acid polypeptide reads, in one-letter code: Kinesin-like protein klpA (770 aa).

The disordered stretch occupies residues 1–152 (MENVQSRMQG…GLGKRGEWDQ (152 aa)). Low complexity predominate over residues 85–105 (SSTLTRSASAASRPRGPLSSS). The span at 106–119 (TSGRPKTSMSTSRR) shows a compositional bias: polar residues. Over residues 134-152 (THQEERSYGGLGKRGEWDQ) the composition is skewed to basic and acidic residues. Residues 175–425 (QESSGLKDAL…QELKGNIRVF (251 aa)) are a coiled coil. Positions 421-756 (NIRVFCRVRP…LKFATKVHNT (336 aa)) constitute a Kinesin motor domain. 514–521 (GQTGSGKT) is a binding site for ATP.

Belongs to the TRAFAC class myosin-kinesin ATPase superfamily. Kinesin family. NCD subfamily.

The protein resides in the cytoplasm. The protein localises to the cytoskeleton. This Emericella nidulans (strain FGSC A4 / ATCC 38163 / CBS 112.46 / NRRL 194 / M139) (Aspergillus nidulans) protein is Kinesin-like protein klpA (klpA).